A 356-amino-acid chain; its full sequence is sn-glycerol-3-phosphate import ATP-binding protein UgpC (356 aa).

Residues 4–235 (LKLQAVTKSW…PASLFVASFI (232 aa)) form the ABC transporter domain. ATP is bound at residue 37-44 (GPSGCGKS).

Belongs to the ABC transporter superfamily. sn-glycerol-3-phosphate importer (TC 3.A.1.1.3) family. In terms of assembly, the complex is composed of two ATP-binding proteins (UgpC), two transmembrane proteins (UgpA and UgpE) and a solute-binding protein (UgpB).

Its subcellular location is the cell inner membrane. The catalysed reaction is sn-glycerol 3-phosphate(out) + ATP + H2O = sn-glycerol 3-phosphate(in) + ADP + phosphate + H(+). It carries out the reaction glycerol 2-phosphate(out) + ATP + H2O = glycerol 2-phosphate(in) + ADP + phosphate + H(+). Its activity is regulated as follows. ATPase activity is stimulated when UgpB is bound to G3P. Transport is inhibited in vivo by increasing levels of internal phosphate. However, ATPase activity in proteoliposomes is neither inhibited by phosphate nor by the signal transducing protein PhoU or the phosphodiesterase UgpQ. Activated by gluconate and inhibited by fumarate. Part of the ABC transporter complex UgpBAEC involved in sn-glycerol-3-phosphate (G3P) import. Responsible for energy coupling to the transport system. Can also transport glycerophosphoryl diesters, which are hydrolyzed to G3P and alcohol during transport. The G3P moiety can be detected in the cytoplasm whereas the corresponding alcohol is usually found in the culture medium. It was proposed by Yang et al that the complex could also transport glycerol-2-phosphate (G2P) in vivo, but it was shown later by Wuttge et al that UgpB does not bind G2P, questioning this transport activity. G2P might be converted in the periplasm to G3P before its transport. This is sn-glycerol-3-phosphate import ATP-binding protein UgpC from Escherichia coli (strain K12).